The chain runs to 245 residues: Octanoyltransferase (245 aa).

A BPL/LPL catalytic domain is found at 54–238 (GEATELVWLL…AFENIFGETR (185 aa)). Substrate is bound by residues 92–99 (RGGQLTYH), 167–169 (AIG), and 180–182 (GIA). Cys198 acts as the Acyl-thioester intermediate in catalysis.

Belongs to the LipB family.

It localises to the cytoplasm. It carries out the reaction octanoyl-[ACP] + L-lysyl-[protein] = N(6)-octanoyl-L-lysyl-[protein] + holo-[ACP] + H(+). It functions in the pathway protein modification; protein lipoylation via endogenous pathway; protein N(6)-(lipoyl)lysine from octanoyl-[acyl-carrier-protein]: step 1/2. Functionally, catalyzes the transfer of endogenously produced octanoic acid from octanoyl-acyl-carrier-protein onto the lipoyl domains of lipoate-dependent enzymes. Lipoyl-ACP can also act as a substrate although octanoyl-ACP is likely to be the physiological substrate. In Rhodopseudomonas palustris (strain TIE-1), this protein is Octanoyltransferase.